A 394-amino-acid chain; its full sequence is Ceramide glucosyltransferase-A (394 aa).

The Lumenal segment spans residues 1-10 (MAVLDLALQG). The helical transmembrane segment at 11 to 32 (LAIFGCVLFFVLWFMHFLSIVY) threads the bilayer. Residues 33 to 195 (TRLHLNKKIS…QVYFGTSHPR (163 aa)) lie on the Cytoplasmic side of the membrane. Residue D92 is a short sequence motif, D1. D144 is a short sequence motif (D2). Residues 196-215 (SYISANVTGFKCVTGMSCLM) traverse the membrane as a helical segment. Residues 216-287 (RKEVLDQAGG…KLRINMLPAT (72 aa)) are Lumenal-facing. Residue D236 is a short sequence motif, D3. The active-site Proton acceptor is the D236. The short motif at 272-276 (RMIRW) is the (Q/R)XXRW element. Residues 288 to 304 (IICEPISECFVASLIIG) form a helical membrane-spanning segment. At 305 to 309 (WAAHH) the chain is on the cytoplasmic side. A helical transmembrane segment spans residues 310 to 328 (IFRWDIMVFFMCHCLAWFI). At 329 to 348 (FDYIQLRGVQGGPLNFSKLD) the chain is on the lumenal side. The helical transmembrane segment at 349 to 369 (YAVAWFIRESMTIYIFLSALW) threads the bilayer. Residues 370–394 (DPTISWRTGRFRLRCGGTAEEILDV) are Cytoplasmic-facing.

It belongs to the glycosyltransferase 2 family. At the late gastrula stage, weakly expressed ubiquitously. As neurulation proceeds (stages 15-16), expression moves towards the dorsal structures: involuted paraxial mesoderm and neural folds. In the tailbud embryo (stage 28), expression is restricted to the notochord. At later stages (stage 35), expression remains in the notochord and also appears weakly in the cephalic region.

The protein localises to the golgi apparatus membrane. It carries out the reaction an N-acylsphing-4-enine + UDP-alpha-D-glucose = a beta-D-glucosyl-(1&lt;-&gt;1')-N-acylsphing-4-enine + UDP + H(+). The enzyme catalyses UDP-alpha-D-xylose + an N-acylsphing-4-enine = a beta-D-xylosyl-(1&lt;-&gt;1')-N-acylsphing-4-enine + UDP + H(+). The catalysed reaction is N-(9Z-octadecenoyl)-sphing-4-enine + UDP-alpha-D-xylose = beta-D-xylosyl-(1&lt;-&gt;1')-N-(9Z-octadecenoyl)-sphing-4-enine + UDP + H(+). It functions in the pathway lipid metabolism; sphingolipid metabolism. Its function is as follows. Participates in the initial step of the glucosylceramide-based glycosphingolipid/GSL synthetic pathway at the cytosolic surface of the Golgi. Catalyzes the transfer of glucose from UDP-glucose to ceramide to produce glucosylceramide/GlcCer (such as beta-D-glucosyl-(1&lt;-&gt;1')-N-acylsphing-4-enine). Glucosylceramide is the core component of glycosphingolipids/GSLs, amphipathic molecules consisting of a ceramide lipid moiety embedded in the outer leaflet of the membrane, linked to one of hundreds of different externally oriented oligosaccharide structures. Glycosphingolipids are essential components of membrane microdomains that mediate membrane trafficking and signal transduction. They are implicated in many fundamental cellular processes, including growth, differentiation, migration, morphogenesis, cell-to-cell and cell-to-matrix interactions. Glycosphingolipids are required for convergence extension movements during early development. Catalyzes the synthesis of xylosylceramide/XylCer (such as beta-D-xylosyl-(1&lt;-&gt;1')-N-acylsphing-4-enine) using UDP-Xyl as xylose donor. This chain is Ceramide glucosyltransferase-A (ugcg-a), found in Xenopus laevis (African clawed frog).